A 337-amino-acid chain; its full sequence is MADTAPQPSKRKRERDPEEAEAPSTEEKEARVGNGTSAPVRLPFSGFRVKKVLRESARDKIIFLHGKVNEASGDGDGEDAIVILEKTPFQVDQVAQLLMGSPELQLQFSNDIYSTYHLFPPRQLSDVKTTVVYPATEKHLQKYLHQDLHLVRETGGDYKNITLPHLESQSLSIQWVYNILDKKAEADRIVFENPDPSDGFVLIPDLKWNQKQLDDLYLIAICHRRGIKSLRDLTPEHLPLLRNILREGQEAILQRYQVTGDRLRVYLHYLPSYYHLHVHFTALGFEAPGAGVERAHLLAEVIENLEQDPEHYQRRTLTFALRADDPLLTLLQEAQRS.

Residues 1–37 (MADTAPQPSKRKRERDPEEAEAPSTEEKEARVGNGTS) form a disordered region. Residue A2 is modified to N-acetylalanine. Residues 10–13 (KRKR) carry the nuclear localization signal (NLS) motif. A phosphoserine mark is found at S24 and S101. An N6-acetyllysine mark is found at K138 and K142. The nuclear export sequence (NES) signature appears at 142–154 (KYLHQDLHLVRET). Substrate is bound by residues W175, E185, D205, K207, and 268 to 279 (HYLPSYYHLHVH). The Histidine triad motif motif lies at 275-279 (HLHVH). H277 serves as the catalytic Nucleophile.

The protein belongs to the HIT family. Homodimer. Associates with components of the exosome multienzyme ribonuclease complex, such as EXOSC3 and EXOSC4. Interacts with NDOR1.

The protein localises to the cytoplasm. The protein resides in the nucleus. The enzyme catalyses a 5'-end (N(7)-methyl 5'-triphosphoguanosine)-ribonucleoside in mRNA + H2O = N(7)-methyl-GMP + a 5'-end diphospho-ribonucleoside in mRNA + 2 H(+). The hydrolytic product 7-methylguanosine diphosphate (m7GDP) efficiently inhibits the decapping scavenger activity and acts as a competitive inhibitor in vitro. Inhibited by 2,4-diaminoquinazoline. In terms of biological role, decapping scavenger enzyme that catalyzes the cleavage of a residual cap structure following the degradation of mRNAs by the 3'-&gt;5' exosome-mediated mRNA decay pathway. Hydrolyzes cap analog structures like 7-methylguanosine nucleoside triphosphate (m7GpppG) with up to 10 nucleotide substrates (small capped oligoribonucleotides) and specifically releases 5'-phosphorylated RNA fragments and 7-methylguanosine monophosphate (m7GMP). Cleaves cap analog structures like tri-methyl guanosine nucleoside triphosphate (m3(2,2,7)GpppG) with very poor efficiency. Does not hydrolyze unmethylated cap analog (GpppG) and shows no decapping activity on intact m7GpppG-capped mRNA molecules longer than 25 nucleotides. Does not hydrolyze 7-methylguanosine diphosphate (m7GDP) to m7GMP. May also play a role in the 5'-&gt;3 mRNA decay pathway; m7GDP, the downstream product released by the 5'-&gt;3' mRNA mediated decapping activity, may be also converted by DCPS to m7GMP. Binds to m7GpppG and strongly to m7GDP. Plays a role in first intron splicing of pre-mRNAs. Inhibits activation-induced cell death. The protein is m7GpppX diphosphatase (DCPS) of Sus scrofa (Pig).